The primary structure comprises 371 residues: Anhydro-N-acetylmuramic acid kinase (371 aa).

12-19 (GTSADGID) contributes to the ATP binding site.

The protein belongs to the anhydro-N-acetylmuramic acid kinase family.

It carries out the reaction 1,6-anhydro-N-acetyl-beta-muramate + ATP + H2O = N-acetyl-D-muramate 6-phosphate + ADP + H(+). It participates in amino-sugar metabolism; 1,6-anhydro-N-acetylmuramate degradation. It functions in the pathway cell wall biogenesis; peptidoglycan recycling. Functionally, catalyzes the specific phosphorylation of 1,6-anhydro-N-acetylmuramic acid (anhMurNAc) with the simultaneous cleavage of the 1,6-anhydro ring, generating MurNAc-6-P. Is required for the utilization of anhMurNAc either imported from the medium or derived from its own cell wall murein, and thus plays a role in cell wall recycling. This chain is Anhydro-N-acetylmuramic acid kinase, found in Saccharophagus degradans (strain 2-40 / ATCC 43961 / DSM 17024).